The following is a 288-amino-acid chain: Cell division protein DivIB (288 aa).

Residues 1-25 (MEKVIDITERVPAMKKRRRRRTNFK) lie on the Cytoplasmic side of the membrane. The chain crosses the membrane as a helical span at residues 26–46 (FLALVTIFLFIIIILLYFQLP). Residues 47–288 (YSDIKKIDIK…LEEQNEEEPE (242 aa)) are Extracellular-facing. The POTRA domain occupies 48-116 (SDIKKIDIKG…NEVQITVEEW (69 aa)). Basic and acidic residues predominate over residues 253-263 (LIKENTEKTEE). The segment at 253 to 288 (LIKENTEKTEEPAEETENADTEEGGQLEEQNEEEPE) is disordered. Acidic residues predominate over residues 264 to 288 (PAEETENADTEEGGQLEEQNEEEPE).

The protein belongs to the FtsQ/DivIB family. DivIB subfamily.

It is found in the cell membrane. Functionally, cell division protein that may be involved in stabilizing or promoting the assembly of the division complex. The protein is Cell division protein DivIB of Solibacillus silvestris (strain StLB046) (Bacillus silvestris).